The following is a 259-amino-acid chain: Small ribosomal subunit protein eS4 (259 aa).

The S4 RNA-binding domain maps to Leu-41 to Met-100.

The protein belongs to the eukaryotic ribosomal protein eS4 family.

The sequence is that of Small ribosomal subunit protein eS4 (rps-4) from Caenorhabditis elegans.